The following is a 568-amino-acid chain: Proline--tRNA ligase (568 aa).

It belongs to the class-II aminoacyl-tRNA synthetase family. ProS type 1 subfamily. As to quaternary structure, homodimer.

It is found in the cytoplasm. The catalysed reaction is tRNA(Pro) + L-proline + ATP = L-prolyl-tRNA(Pro) + AMP + diphosphate. In terms of biological role, catalyzes the attachment of proline to tRNA(Pro) in a two-step reaction: proline is first activated by ATP to form Pro-AMP and then transferred to the acceptor end of tRNA(Pro). As ProRS can inadvertently accommodate and process non-cognate amino acids such as alanine and cysteine, to avoid such errors it has two additional distinct editing activities against alanine. One activity is designated as 'pretransfer' editing and involves the tRNA(Pro)-independent hydrolysis of activated Ala-AMP. The other activity is designated 'posttransfer' editing and involves deacylation of mischarged Ala-tRNA(Pro). The misacylated Cys-tRNA(Pro) is not edited by ProRS. This is Proline--tRNA ligase from Listeria monocytogenes serotype 4a (strain HCC23).